The primary structure comprises 324 residues: Probable UDP-sugar transporter protein SLC35A4 (324 aa).

The Cytoplasmic portion of the chain corresponds to 1-18; it reads MSVEDGGVPGLGRPRKAR. The chain crosses the membrane as a helical span at residues 19 to 39; that stretch reads WTLMLLLSTAMYGAHAPLLAL. Topologically, residues 40–52 are lumenal; the sequence is CHVDGRVPFRPSS. Residues 53–73 traverse the membrane as a helical segment; the sequence is AVLLTELTKLLLCALSLLVGW. Over 74 to 85 the chain is Cytoplasmic; the sequence is QAWPQGTPPWRQ. Residues 86–106 traverse the membrane as a helical segment; it reads AAPFALSALLYGANNNLVIYL. Topologically, residues 107–141 are lumenal; it reads QRYMDPSTYQVLSNLKIGSTALFYCLCLRHRLSAR. A helical membrane pass occupies residues 142–162; that stretch reads QGLALLLLMAAGACYAAGGLQ. The Cytoplasmic segment spans residues 163–180; that stretch reads DPGTTLPGPPSAAATSPM. The chain crosses the membrane as a helical span at residues 181-201; it reads PLHITPLGLLLLILYCLISGL. The Lumenal segment spans residues 202-214; the sequence is SSVYTELLMKRQR. Residues 215 to 235 form a helical membrane-spanning segment; sequence LPLALQNLFLYSFGVLLNLGL. At 236–248 the chain is on the cytoplasmic side; that stretch reads HAGGGPGPGLLEG. A helical membrane pass occupies residues 249–271; sequence FSGWMALVVLSQALNGLLMSAVM. Residues 272–275 are Lumenal-facing; the sequence is KHGS. The helical transmembrane segment at 276 to 298 threads the bilayer; it reads SITRLFVVSCSLVVNAVLSAALL. Residues 299–324 are Cytoplasmic-facing; the sequence is RLQLTAAFFLATLLIGLAVRLYYGSR.

Belongs to the nucleotide-sugar transporter family. SLC35A subfamily. As to quaternary structure, found in a complex with SLC35A2 and SLC35A3.

The protein localises to the golgi apparatus membrane. It catalyses the reaction CDP-L-ribitol(in) + CDP(out) = CDP-L-ribitol(out) + CDP(in). Functionally, mediates the transport of CDP-ribitol. Does not exhibit CMP-sialic acid, UDP-galactose and UDP-N-acetylglucosamine transport activity. In Bos taurus (Bovine), this protein is Probable UDP-sugar transporter protein SLC35A4.